A 463-amino-acid polypeptide reads, in one-letter code: Chaperone SurA (463 aa).

Positions 1-25 (MTKPFSVVLASLLAITSTVSPLASA) are cleaved as a signal peptide. PpiC domains lie at 174–276 (GSQY…KLVE) and 289–388 (VTEY…QRVG). Disordered regions lie at residues 329 to 348 (ATAKESSEDTNSRGQGGDLG) and 431 to 463 (YRTGDRADDNATAAPAKSPDPAAPSPPPAKPTR). Residues 441 to 450 (ATAAPAKSPD) are compositionally biased toward low complexity. Pro residues predominate over residues 451 to 463 (PAAPSPPPAKPTR).

It is found in the periplasm. It carries out the reaction [protein]-peptidylproline (omega=180) = [protein]-peptidylproline (omega=0). Chaperone involved in the correct folding and assembly of outer membrane proteins. Recognizes specific patterns of aromatic residues and the orientation of their side chains, which are found more frequently in integral outer membrane proteins. May act in both early periplasmic and late outer membrane-associated steps of protein maturation. In Xanthomonas axonopodis pv. citri (strain 306), this protein is Chaperone SurA.